Here is a 370-residue protein sequence, read N- to C-terminus: Protein STRICTOSIDINE SYNTHASE-LIKE 4 (370 aa).

The first 21 residues, 1–21 (MVLFFSTRFLFFSIFFPCLIS), serve as a signal peptide directing secretion. A glycan (N-linked (GlcNAc...) asparagine) is linked at Asn-101. At Tyr-303 the chain carries Phosphotyrosine.

This sequence belongs to the strictosidine synthase family.

It localises to the vacuole. In Arabidopsis thaliana (Mouse-ear cress), this protein is Protein STRICTOSIDINE SYNTHASE-LIKE 4.